We begin with the raw amino-acid sequence, 453 residues long: Obtusifoliol 14-alpha demethylase (453 aa).

Cysteine 395 is a binding site for heme.

It belongs to the cytochrome P450 family. The cofactor is heme.

It localises to the membrane. The enzyme catalyses a 14alpha-methyl steroid + 3 reduced [NADPH--hemoprotein reductase] + 3 O2 = a Delta(14) steroid + formate + 3 oxidized [NADPH--hemoprotein reductase] + 4 H2O + 4 H(+). The protein operates within steroid biosynthesis; zymosterol biosynthesis; zymosterol from lanosterol: step 1/6. Functionally, catalyzes the 14-alpha demethylation of obtusifoliol to 4 alpha-methyl-5 alpha-ergosta-8,14,24(28)-trien-3 beta-ol. This is Obtusifoliol 14-alpha demethylase (CYP51) from Triticum aestivum (Wheat).